The primary structure comprises 309 residues: MDAFQGILKFFLNQKTVIGYSFMALLTVGSERLFSVVAFKCPCSTENMTYGLVFLFAPAWVLLILGFFLNNRSWRLFTGCCVNPRKIFPRGHSCRFFYVLGQITLSSLVAPVMWLSVALLNGTFYECAMSGTRSSGLLELICKGKPKECWEELHKVSCGKTSMLPTVNEELKLSLQAQSQILGWCLICSASFFSLLTTCYARCRSKVSYLQLSFWKTYAQKEKEQLENTFLDYANKLSERNLKCFFENKRPDPFPMPTFAAWEAASELHSFHQSQQHYSTLHRVVDNGLQLSPEDDETTMVLVGTAHNM.

Residues 1 to 15 lie on the Cytoplasmic side of the membrane; sequence MDAFQGILKFFLNQK. A 1,2-diacyl-sn-glycero-3-phosphate-binding residues include Lys-15, Arg-32, and Val-37. The chain crosses the membrane as a helical span at residues 16–37; the sequence is TVIGYSFMALLTVGSERLFSVV. Residues 38 to 45 lie on the Extracellular side of the membrane; sequence AFKCPCST. Intrachain disulfides connect Cys-41/Cys-127, Cys-43/Cys-158, and Cys-142/Cys-149. The helical transmembrane segment at 46–70 threads the bilayer; that stretch reads ENMTYGLVFLFAPAWVLLILGFFLN. Residues 71-99 lie on the Cytoplasmic side of the membrane; the sequence is NRSWRLFTGCCVNPRKIFPRGHSCRFFYV. The chain crosses the membrane as a helical span at residues 100–129; that stretch reads LGQITLSSLVAPVMWLSVALLNGTFYECAM. 2 residues coordinate a 1,2-diacyl-sn-glycero-3-phosphate: Gln-102 and Asn-121. The Extracellular segment spans residues 130–174; it reads SGTRSSGLLELICKGKPKECWEELHKVSCGKTSMLPTVNEELKLS. Residues 175–200 form a helical membrane-spanning segment; sequence LQAQSQILGWCLICSASFFSLLTTCY. The Cytoplasmic segment spans residues 201-309; sequence ARCRSKVSYL…MVLVGTAHNM (109 aa). An a 1,2-diacyl-sn-glycero-3-phosphate-binding site is contributed by Arg-202.

This sequence belongs to the CALHM family. Oligomerizes to form undecameric cone-shaped channels.

It is found in the membrane. In terms of biological role, may assemble to form large pore channels with gating and ion conductance likely regulated by membrane lipids. The protein is Calcium homeostasis modulator protein 5 of Homo sapiens (Human).